Here is a 431-residue protein sequence, read N- to C-terminus: Serine--tRNA ligase (431 aa).

The disordered stretch occupies residues 41–66 (QSRTQELQAERNARSKSIGEAARRGE). L-serine is bound at residue 240 to 242 (TSE). Position 271–273 (271–273 (RSE)) interacts with ATP. An L-serine-binding site is contributed by Glu294. Residue 358 to 361 (EISS) participates in ATP binding. Ser392 provides a ligand contact to L-serine.

The protein belongs to the class-II aminoacyl-tRNA synthetase family. Type-1 seryl-tRNA synthetase subfamily. Homodimer. The tRNA molecule binds across the dimer.

It localises to the cytoplasm. It carries out the reaction tRNA(Ser) + L-serine + ATP = L-seryl-tRNA(Ser) + AMP + diphosphate + H(+). The enzyme catalyses tRNA(Sec) + L-serine + ATP = L-seryl-tRNA(Sec) + AMP + diphosphate + H(+). The protein operates within aminoacyl-tRNA biosynthesis; selenocysteinyl-tRNA(Sec) biosynthesis; L-seryl-tRNA(Sec) from L-serine and tRNA(Sec): step 1/1. Its function is as follows. Catalyzes the attachment of serine to tRNA(Ser). Is also able to aminoacylate tRNA(Sec) with serine, to form the misacylated tRNA L-seryl-tRNA(Sec), which will be further converted into selenocysteinyl-tRNA(Sec). The polypeptide is Serine--tRNA ligase (Aeromonas salmonicida (strain A449)).